Here is a 670-residue protein sequence, read N- to C-terminus: DNA ligase (670 aa).

NAD(+) contacts are provided by residues 35 to 39, 84 to 85, and glutamate 116; these read DSVYD and SL. The active-site N6-AMP-lysine intermediate is the lysine 118. 4 residues coordinate NAD(+): arginine 139, glutamate 176, lysine 293, and lysine 317. Zn(2+) contacts are provided by cysteine 411, cysteine 414, cysteine 429, and cysteine 435. Residues 592–670 enclose the BRCT domain; the sequence is VVKSEIAGKT…EEAFLKLLKS (79 aa).

This sequence belongs to the NAD-dependent DNA ligase family. LigA subfamily. Mg(2+) serves as cofactor. Mn(2+) is required as a cofactor.

The catalysed reaction is NAD(+) + (deoxyribonucleotide)n-3'-hydroxyl + 5'-phospho-(deoxyribonucleotide)m = (deoxyribonucleotide)n+m + AMP + beta-nicotinamide D-nucleotide.. Functionally, DNA ligase that catalyzes the formation of phosphodiester linkages between 5'-phosphoryl and 3'-hydroxyl groups in double-stranded DNA using NAD as a coenzyme and as the energy source for the reaction. It is essential for DNA replication and repair of damaged DNA. The chain is DNA ligase from Coxiella burnetii (strain Dugway 5J108-111).